Reading from the N-terminus, the 351-residue chain is Phosphoribosylformylglycinamidine cyclo-ligase (351 aa).

It belongs to the AIR synthase family.

It localises to the cytoplasm. The catalysed reaction is 2-formamido-N(1)-(5-O-phospho-beta-D-ribosyl)acetamidine + ATP = 5-amino-1-(5-phospho-beta-D-ribosyl)imidazole + ADP + phosphate + H(+). It participates in purine metabolism; IMP biosynthesis via de novo pathway; 5-amino-1-(5-phospho-D-ribosyl)imidazole from N(2)-formyl-N(1)-(5-phospho-D-ribosyl)glycinamide: step 2/2. This is Phosphoribosylformylglycinamidine cyclo-ligase from Synechococcus sp. (strain JA-3-3Ab) (Cyanobacteria bacterium Yellowstone A-Prime).